We begin with the raw amino-acid sequence, 88 residues long: Large ribosomal subunit protein bL27 (88 aa).

The interval Met-1–Leu-21 is disordered.

Belongs to the bacterial ribosomal protein bL27 family.

The polypeptide is Large ribosomal subunit protein bL27 (Mycobacterium avium (strain 104)).